Consider the following 199-residue polypeptide: Proteasome subunit beta type-2-B (199 aa).

At methionine 1 the chain carries N-acetylmethionine.

This sequence belongs to the peptidase T1B family. As to quaternary structure, component of the 20S core complex of the 26S proteasome. The 26S proteasome is composed of a core protease (CP), known as the 20S proteasome, capped at one or both ends by the 19S regulatory particle (RP/PA700). The 20S proteasome core is composed of 28 subunits that are arranged in four stacked rings, resulting in a barrel-shaped structure. The two end rings are each formed by seven alpha subunits, and the two central rings are each formed by seven beta subunits. The catalytic chamber with the active sites is on the inside of the barrel. As to expression, ubiquitous low levels, higher expression in siliques and flowers.

It localises to the cytoplasm. It is found in the nucleus. Functionally, non-catalytic component of the proteasome, a multicatalytic proteinase complex which is characterized by its ability to cleave peptides with Arg, Phe, Tyr, Leu, and Glu adjacent to the leaving group at neutral or slightly basic pH. The proteasome has an ATP-dependent proteolytic activity. This chain is Proteasome subunit beta type-2-B (PBD2), found in Arabidopsis thaliana (Mouse-ear cress).